A 107-amino-acid chain; its full sequence is Integration host factor subunit alpha (107 aa).

This sequence belongs to the bacterial histone-like protein family. In terms of assembly, heterodimer of an alpha and a beta chain.

In terms of biological role, this protein is one of the two subunits of integration host factor, a specific DNA-binding protein that functions in genetic recombination as well as in transcriptional and translational control. The protein is Integration host factor subunit alpha of Mesorhizobium japonicum (strain LMG 29417 / CECT 9101 / MAFF 303099) (Mesorhizobium loti (strain MAFF 303099)).